A 240-amino-acid chain; its full sequence is UDP-2,3-diacylglucosamine hydrolase (240 aa).

5 residues coordinate Mn(2+): Asp-8, His-10, Asp-41, Asn-79, and His-114. 79–80 (NR) is a binding site for substrate. Substrate contacts are provided by Asp-122, Ser-160, Asn-164, Lys-167, and His-195. Mn(2+) contacts are provided by His-195 and His-197.

It belongs to the LpxH family. The cofactor is Mn(2+).

It is found in the cell inner membrane. The enzyme catalyses UDP-2-N,3-O-bis[(3R)-3-hydroxytetradecanoyl]-alpha-D-glucosamine + H2O = 2-N,3-O-bis[(3R)-3-hydroxytetradecanoyl]-alpha-D-glucosaminyl 1-phosphate + UMP + 2 H(+). It functions in the pathway glycolipid biosynthesis; lipid IV(A) biosynthesis; lipid IV(A) from (3R)-3-hydroxytetradecanoyl-[acyl-carrier-protein] and UDP-N-acetyl-alpha-D-glucosamine: step 4/6. Hydrolyzes the pyrophosphate bond of UDP-2,3-diacylglucosamine to yield 2,3-diacylglucosamine 1-phosphate (lipid X) and UMP by catalyzing the attack of water at the alpha-P atom. Involved in the biosynthesis of lipid A, a phosphorylated glycolipid that anchors the lipopolysaccharide to the outer membrane of the cell. This chain is UDP-2,3-diacylglucosamine hydrolase, found in Yersinia pseudotuberculosis serotype O:1b (strain IP 31758).